The chain runs to 162 residues: ATP-dependent Clp protease adapter protein CLPS1, chloroplastic (162 aa).

A chloroplast-targeting transit peptide spans 1 to 58 (MAASCLRPAPTASAQMMTRSPVAGLPRPCSALQRSGCTLQGAFGTFAPQTTRTFVVTW).

It belongs to the ClpS family.

Its subcellular location is the plastid. The protein resides in the chloroplast stroma. In terms of biological role, small adapter protein that modulate the activity of plastid Clp protease system (CLPC). Probably involved in substrate selection for plastid CLPC. The sequence is that of ATP-dependent Clp protease adapter protein CLPS1, chloroplastic from Chlamydomonas reinhardtii (Chlamydomonas smithii).